Here is a 195-residue protein sequence, read N- to C-terminus: Kunitz-type protein bli-5 (195 aa).

The N-terminal stretch at 1-17 (MKTALLSLILFSCHIWA) is a signal peptide. The 71-residue stretch at 120 to 190 (CIQGLSPVDG…KTKLQCESYC (71 aa)) folds into the BPTI/Kunitz inhibitor domain. 2 cysteine pairs are disulfide-bonded: Cys-120–Cys-190 and Cys-164–Cys-186.

Functionally, appears to lack serine protease inhibitor activity in vitro when tested with bovine pancreatic alpha-chymotrypsin and elastase. May be involved in cuticle biosynthesis. The chain is Kunitz-type protein bli-5 from Haemonchus contortus (Barber pole worm).